Here is a 7785-residue protein sequence, read N- to C-terminus: Probable non-canonical nonribosomal peptide synthetase (NRPS) CymA (7785 aa).

3 consecutive Carrier domains span residues 487 to 562 (TARS…QRQE), 1908 to 1983 (HART…SEQQ), and 2958 to 3033 (SPGM…LEGG). An O-(pantetheine 4'-phosphoryl)serine mark is found at S522, S1943, and S2993. An LRR 1 repeat occupies 3088–3111 (RLALADVVVRHEALRTVFAERAGN). Carrier domains follow at residues 3978–4053 (APRT…SEQQ), 5002–5077 (EPRT…LEAN), and 6389–6464 (GPRD…AQGS). S4013, S5037, and S6424 each carry O-(pantetheine 4'-phosphoryl)serine. Residues 6853 to 6875 (TGVSRVDLSVNAIETFDDHGLPA) form an LRR 2 repeat. Residues 7432–7507 (GPRTPQEEIL…QLAEQLGSDG (76 aa)) form the Carrier 7 domain. Residue S7467 is modified to O-(pantetheine 4'-phosphoryl)serine.

Pantetheine 4'-phosphate serves as cofactor.

In terms of biological role, probable non-canonical nonribosomal peptide synthetase (NRPS); part of the gene cluster that mediates the biosynthesis of cyclic heptapeptides, known as cyclomarins and also of cyclic dipeptides, called cyclomarazines, which have both antimicrobial and cytotoxic effects. First, CymD catalyzes the reverse N-prenylation of monomeric L-tryptophan with dimethylallyl diphosphate (DMAPP) to form N-(1,1-dimethylallyl)-tryptophan (r-N-DMAT). The N-(1,1-dimethylallyl)-tryptophan produced by CymD is then combined with a range of standard and nonproteinogenic amino acid substrates to synthesize the peptides, a process that is probably catalyzed by the non-canonical nonribosomal peptide synthetase (NRPS), CymA. Other proteins in the cluster catalyze further modifications of the peptides including CymV which catalyzes the oxidation of olefinic cyclomarins and cyclomarazines to their respective epoxide derivatives. The polypeptide is Probable non-canonical nonribosomal peptide synthetase (NRPS) CymA (Salinispora arenicola (strain CNS-205)).